A 426-amino-acid chain; its full sequence is Histidine--tRNA ligase (426 aa).

Belongs to the class-II aminoacyl-tRNA synthetase family. Homodimer.

The protein resides in the cytoplasm. The catalysed reaction is tRNA(His) + L-histidine + ATP = L-histidyl-tRNA(His) + AMP + diphosphate + H(+). This chain is Histidine--tRNA ligase, found in Pseudoalteromonas atlantica (strain T6c / ATCC BAA-1087).